The sequence spans 64 residues: Myotoxin-2 (64 aa).

The signal sequence occupies residues 1 to 21; it reads KILYLLFAFLFLAFLSEPGNA. A disulfide bridge connects residues cysteine 32 and cysteine 51.

This sequence belongs to the crotamine-myotoxin family. As to quaternary structure, monomer. Expressed by the venom gland.

The protein localises to the secreted. Functionally, cationic peptide that possesses multiple functions. It acts as a cell-penetrating peptide (CPP), and as a potent voltage-gated potassium channel (Kv) inhibitor. It exhibits antimicrobial activities, hind limb paralysis, and severe muscle necrosis by a non-enzymatic mechanism. This Crotalus durissus terrificus (South American rattlesnake) protein is Myotoxin-2.